Consider the following 187-residue polypeptide: Interferon beta (187 aa).

The first 21 residues, 1-21, serve as a signal peptide directing secretion; the sequence is MTNKCLLQIALLLCFSTTALS. At Tyr-24 the chain carries Phosphotyrosine. An intrachain disulfide couples Cys-52 to Cys-162. Asn-101 is a glycosylation site (N-linked (GlcNAc...) asparagine).

The protein belongs to the alpha/beta interferon family. Monomer.

The protein localises to the secreted. Type I interferon cytokine that plays a key role in the innate immune response to infection, developing tumors and other inflammatory stimuli. Signals via binding to high-affinity (IFNAR2) and low-affinity (IFNAR1) heterodimeric receptor, activating the canonical Jak-STAT signaling pathway resulting in transcriptional activation or repression of interferon-regulated genes that encode the effectors of the interferon response, such as antiviral proteins, regulators of cell proliferation and differentiation, and immunoregulatory proteins. Signals mostly via binding to a IFNAR1-IFNAR2 heterodimeric receptor, but can also function with IFNAR1 alone and independently of Jak-STAT pathways. Elicits a wide variety of responses, including antiviral and antibacterial activities, and can regulate the development of B-cells, myelopoiesis and lipopolysaccharide (LPS)-inducible production of tumor necrosis factor. Plays a role in neuronal homeostasis by regulating dopamine turnover and protecting dopaminergic neurons: acts by promoting neuronal autophagy and alpha-synuclein clearance, thereby preventing dopaminergic neuron loss. IFNB1 is more potent than interferon-alpha (IFN-alpha) in inducing the apoptotic and antiproliferative pathways required for control of tumor cell growth. The protein is Interferon beta of Homo sapiens (Human).